Here is a 188-residue protein sequence, read N- to C-terminus: Elongation factor P-like protein (188 aa).

Belongs to the elongation factor P family.

This chain is Elongation factor P-like protein, found in Xylella fastidiosa (strain M23).